The primary structure comprises 171 residues: Large ribosomal subunit protein uL10 (171 aa).

It belongs to the universal ribosomal protein uL10 family. In terms of assembly, part of the ribosomal stalk of the 50S ribosomal subunit. The N-terminus interacts with L11 and the large rRNA to form the base of the stalk. The C-terminus forms an elongated spine to which L12 dimers bind in a sequential fashion forming a multimeric L10(L12)X complex.

Forms part of the ribosomal stalk, playing a central role in the interaction of the ribosome with GTP-bound translation factors. The chain is Large ribosomal subunit protein uL10 from Rhizorhabdus wittichii (strain DSM 6014 / CCUG 31198 / JCM 15750 / NBRC 105917 / EY 4224 / RW1) (Sphingomonas wittichii).